A 217-amino-acid chain; its full sequence is Adenylate kinase (217 aa).

11–16 (GAGKGT) is an ATP binding site. The NMP stretch occupies residues 31–60 (STGDMFREAMANKTPVGLEAKSYIDKGDLV). AMP is bound by residues Thr32, Arg37, 58-60 (DLV), 86-89 (GFPR), and Gln93. The interval 127–165 (ARFMCKNCGATYNKFSKKPKVEGTCDRCGGHEFYQREDD) is LID. Arg128 contacts ATP. Zn(2+) is bound by residues Cys131 and Cys134. Residue 137-138 (TY) coordinates ATP. Zn(2+) contacts are provided by Cys151 and Cys154. AMP is bound by residues Arg162 and Arg173. Gln201 is an ATP binding site.

It belongs to the adenylate kinase family. Monomer.

It localises to the cytoplasm. It carries out the reaction AMP + ATP = 2 ADP. It participates in purine metabolism; AMP biosynthesis via salvage pathway; AMP from ADP: step 1/1. Functionally, catalyzes the reversible transfer of the terminal phosphate group between ATP and AMP. Plays an important role in cellular energy homeostasis and in adenine nucleotide metabolism. In Lactobacillus delbrueckii subsp. bulgaricus (strain ATCC 11842 / DSM 20081 / BCRC 10696 / JCM 1002 / NBRC 13953 / NCIMB 11778 / NCTC 12712 / WDCM 00102 / Lb 14), this protein is Adenylate kinase.